A 64-amino-acid polypeptide reads, in one-letter code: Large ribosomal subunit protein bL33 (64 aa).

It belongs to the bacterial ribosomal protein bL33 family.

The sequence is that of Large ribosomal subunit protein bL33 from Parasynechococcus marenigrum (strain WH8102).